Here is a 352-residue protein sequence, read N- to C-terminus: MKKIVFTGGGSAGHVTPNLAIIPHLQEQNWDISYIGSHQGIEKTIIEKEGIPYYSIASGKLRRYFDLKNIKDPFLVMKGVMDAYVRIRKLKPDVIFSKGGFVSVPVVIGGWLNRVPVLLHESDMTPGLANKIALRFASKIFVTFEEAAKHLPKEKVIYTGSPVREEVLKGNREKGLAFLGFSRKKPVITIMGGSLGAKKINETVREALPELLKKYQIVHLCGKGNLDESLQNKEGYRQFEYVHGELPDILAITDFVISRAGSNAIFEFLTLQKPMVLIPLSKFASRGDQILNAESFERQGYASVLYEEDVTVKSLIKHVEELNQNNEMYKTALKKYNGKEAIQTIIQHISEA.

UDP-N-acetyl-alpha-D-glucosamine is bound by residues 11-13, Arg-164, Ser-194, and Gln-289; that span reads SAG.

The protein belongs to the glycosyltransferase 28 family. MurG subfamily.

It localises to the cell membrane. It catalyses the reaction di-trans,octa-cis-undecaprenyl diphospho-N-acetyl-alpha-D-muramoyl-L-alanyl-D-glutamyl-meso-2,6-diaminopimeloyl-D-alanyl-D-alanine + UDP-N-acetyl-alpha-D-glucosamine = di-trans,octa-cis-undecaprenyl diphospho-[N-acetyl-alpha-D-glucosaminyl-(1-&gt;4)]-N-acetyl-alpha-D-muramoyl-L-alanyl-D-glutamyl-meso-2,6-diaminopimeloyl-D-alanyl-D-alanine + UDP + H(+). Its pathway is cell wall biogenesis; peptidoglycan biosynthesis. Its function is as follows. Cell wall formation. Catalyzes the transfer of a GlcNAc subunit on undecaprenyl-pyrophosphoryl-MurNAc-pentapeptide (lipid intermediate I) to form undecaprenyl-pyrophosphoryl-MurNAc-(pentapeptide)GlcNAc (lipid intermediate II). The chain is UDP-N-acetylglucosamine--N-acetylmuramyl-(pentapeptide) pyrophosphoryl-undecaprenol N-acetylglucosamine transferase 2 from Bacillus cereus (strain ATCC 10987 / NRS 248).